The primary structure comprises 492 residues: MDAMKYHDLRDFLTLLEQQGELKRITLPVDPHLEITEIADRTLRAGGPALLFENPKGYAMPVLCNLFGTPKRVAMGMGQDDVSALREVGKLLAFLKEPEPPKGFRDLFDKLPQFKQVLNMPTKRLRGAPCQQKIASGDDVDLTRLPVMTCWPDDAAPLITWGLTVTRGPHKERQNLGIYRQQLIGKNKLIMRWLSHRGGALDFQEWLAARPGERFPVSVALGADPATILGAVTPVPDTLSEYAFAGLLRGTKTEVVKCLSNDLEVPASAEIILEGYIEPGEMAPEGPYGDHTGYYNEVDNFPVFTVTHITQREDAIYHSTYTGRPPDEPAVLGVALNEVFVPILQKQFPEIVDFYLPPEGCSYRLAVVTMKKQYAGHAKRVMMGVWSFLRQFMYTKFVIVCDDDVNARDWNDVIWAITTRMDPARDTVLVENTPIDYLDFASPVSGLGSKMGLDATNKWPGETQREWGRPIVKDPEVTARIDAIWDELAIFK.

Residue N175 participates in Mn(2+) binding. Prenylated FMN contacts are provided by residues 178–180 (IYR), 192–194 (RWL), and 197–198 (RG). E241 is a binding site for Mn(2+). D290 acts as the Proton donor in catalysis.

This sequence belongs to the UbiD family. In terms of assembly, homohexamer. Prenylated FMN serves as cofactor. Mn(2+) is required as a cofactor.

The protein localises to the cell membrane. It carries out the reaction a 4-hydroxy-3-(all-trans-polyprenyl)benzoate + H(+) = a 2-(all-trans-polyprenyl)phenol + CO2. Its pathway is cofactor biosynthesis; ubiquinone biosynthesis. Functionally, catalyzes the decarboxylation of 3-octaprenyl-4-hydroxy benzoate to 2-octaprenylphenol, an intermediate step in ubiquinone biosynthesis. This is 3-octaprenyl-4-hydroxybenzoate carboxy-lyase from Salmonella typhi.